Here is a 1081-residue protein sequence, read N- to C-terminus: Teashirt homolog 3 (1081 aa).

2 disordered regions span residues 141 to 161 (PSSE…SSCG) and 238 to 257 (HYRD…WSKP). A compositionally biased stretch (low complexity) spans 148 to 161 (GSSSSSSSSSSSCG). C2H2-type zinc fingers lie at residues 214 to 238 (FRCK…ETGH) and 275 to 299 (LKCM…KTKH). Positions 238-247 (HYRDDNHETD) are enriched in basic and acidic residues. Residues 325–364 (SLELELPSSPDSTGGTPKATISDTNDALQKNSNPYITPNN) form a disordered region. Residues 335–364 (DSTGGTPKATISDTNDALQKNSNPYITPNN) show a composition bias toward polar residues. The segment at 386 to 404 (LKCMECGSSHDTLQELTAH) adopts a C2H2-type 3; atypical zinc-finger fold. The segment covering 473–491 (EVDKEKAVTDEKPKQKDKP) has biased composition (basic and acidic residues). 4 disordered regions span residues 473–502 (EVDK…DISS), 579–604 (NSEI…PMPK), 626–687 (EKMK…LAEP), and 855–897 (TESH…RQSN). Positions 581–603 (EIVSPTKNQTLVSPPSSQTSPMP) are enriched in polar residues. Positions 606-630 (NFHAMEELVKKVTEKVAKVEEKMKE) form a coiled coil. Serine 682 is subject to Phosphoserine. The segment covering 856-869 (ESHTSKSSTPSSIS) has biased composition (low complexity). A DNA-binding region (homeobox; atypical) is located at residues 891–961 (RKGRQSNWNP…NVKYQLRRTG (71 aa)). 2 C2H2-type zinc fingers span residues 976-998 (FFCN…LESH) and 1041-1064 (YQCK…SKTH).

Belongs to the teashirt C2H2-type zinc-finger protein family. In terms of assembly, interacts (via homeobox domain) with APBB1 (via PID domain 1). Interacts (via N-terminus) with HDAC1 and HDAC2; the interaction is direct. Found in a trimeric complex with APBB1 and HDAC1; the interaction between HDAC1 and APBB1 is mediated by TSHZ3. Expressed in brain; strongly reduced in post-mortem elderly subjects with Alzheimer disease. Expressed in the fetal neocortex.

The protein resides in the nucleus. Its subcellular location is the cell projection. The protein localises to the growth cone. Transcriptional regulator involved in developmental processes. Functions in association with APBB1, SET and HDAC factors as a transcriptional repressor, that inhibits the expression of CASP4. TSHZ3-mediated transcription repression involves the recruitment of histone deacetylases HDAC1 and HDAC2. Associates with chromatin in a region surrounding the CASP4 transcriptional start site(s). Regulates the development of neurons involved in both respiratory rhythm and airflow control. Promotes maintenance of nucleus ambiguus (nA) motoneurons, which govern upper airway function, and establishes a respiratory rhythm generator (RRG) activity compatible with survival at birth. Involved in the differentiation of the proximal uretic smooth muscle cells during developmental processes. Involved in the up-regulation of myocardin, that directs the expression of smooth muscle cells in the proximal ureter. Involved in the modulation of glutamatergic synaptic transmission and long-term synaptic potentiation. This is Teashirt homolog 3 (TSHZ3) from Homo sapiens (Human).